Here is a 151-residue protein sequence, read N- to C-terminus: UPF0178 protein Suden_0449 (151 aa).

The protein belongs to the UPF0178 family.

This chain is UPF0178 protein Suden_0449, found in Sulfurimonas denitrificans (strain ATCC 33889 / DSM 1251) (Thiomicrospira denitrificans (strain ATCC 33889 / DSM 1251)).